Here is a 441-residue protein sequence, read N- to C-terminus: Dolichyl-diphosphooligosaccharide--protein glycosyltransferase 48 kDa subunit (441 aa).

A signal peptide spans Met1–Ser28. Over Gly29–Pro412 the chain is Lumenal. A helical membrane pass occupies residues Tyr413–Leu432. Topologically, residues His433 to Asp441 are cytoplasmic.

It belongs to the DDOST 48 kDa subunit family. In terms of assembly, component of the oligosaccharyltransferase (OST) complex. OST exists in two different complex forms which contain common core subunits RPN1, RPN2, OST48, OST4, DAD1 and TMEM258, either STT3A or STT3B as catalytic subunits, and form-specific accessory subunits. STT3A complex assembly occurs through the formation of 3 subcomplexes. Subcomplex 1 contains RPN1 and TMEM258, subcomplex 2 contains the STT3A-specific subunits STT3A, DC2/OSTC, and KCP2 as well as the core subunit OST4, and subcomplex 3 contains RPN2, DAD1, and OST48. The STT3A complex can form stable complexes with the Sec61 complex or with both the Sec61 and TRAP complexes. Interacts with SMIM22.

Its subcellular location is the endoplasmic reticulum membrane. Its pathway is protein modification; protein glycosylation. In terms of biological role, subunit of the oligosaccharyl transferase (OST) complex that catalyzes the initial transfer of a defined glycan (Glc(3)Man(9)GlcNAc(2) in eukaryotes) from the lipid carrier dolichol-pyrophosphate to an asparagine residue within an Asn-X-Ser/Thr consensus motif in nascent polypeptide chains, the first step in protein N-glycosylation. N-glycosylation occurs cotranslationally and the complex associates with the Sec61 complex at the channel-forming translocon complex that mediates protein translocation across the endoplasmic reticulum (ER). All subunits are required for a maximal enzyme activity. Required for the assembly of both SST3A- and SS3B-containing OST complexes. This Rattus norvegicus (Rat) protein is Dolichyl-diphosphooligosaccharide--protein glycosyltransferase 48 kDa subunit.